The sequence spans 229 residues: Ribulose-phosphate 3-epimerase (229 aa).

Substrate is bound at residue serine 13. A divalent metal cation-binding residues include histidine 36, aspartate 38, and histidine 69. The active-site Proton acceptor is aspartate 38. Substrate contacts are provided by residues histidine 69, 145–148 (GFGG), 178–180 (DGG), and 200–201 (GS). Aspartate 178 is a binding site for a divalent metal cation. Aspartate 178 serves as the catalytic Proton donor.

It belongs to the ribulose-phosphate 3-epimerase family. A divalent metal cation is required as a cofactor.

It catalyses the reaction D-ribulose 5-phosphate = D-xylulose 5-phosphate. The protein operates within carbohydrate degradation. Its function is as follows. Catalyzes the reversible epimerization of D-ribulose 5-phosphate to D-xylulose 5-phosphate. The protein is Ribulose-phosphate 3-epimerase of Mycobacterium bovis (strain ATCC BAA-935 / AF2122/97).